We begin with the raw amino-acid sequence, 214 residues long: Adenylate kinase (214 aa).

10–15 (GAGKGT) provides a ligand contact to ATP. The interval 30–59 (STGDMLRAAVKAGSELGLKAKEIMDAGKLV) is NMP. AMP contacts are provided by residues threonine 31, arginine 36, 57–59 (KLV), 85–88 (GFPR), and glutamine 92. An LID region spans residues 122 to 159 (GRRVHAPSGRVYHVTFNPPRVEGKDDMTGEELTTRKDD). Residues arginine 123 and 132-133 (VY) contribute to the ATP site. AMP-binding residues include arginine 156 and arginine 167. Position 200 (arginine 200) interacts with ATP.

This sequence belongs to the adenylate kinase family. Monomer.

It is found in the cytoplasm. It catalyses the reaction AMP + ATP = 2 ADP. It functions in the pathway purine metabolism; AMP biosynthesis via salvage pathway; AMP from ADP: step 1/1. In terms of biological role, catalyzes the reversible transfer of the terminal phosphate group between ATP and AMP. Plays an important role in cellular energy homeostasis and in adenine nucleotide metabolism. The polypeptide is Adenylate kinase (Erwinia tasmaniensis (strain DSM 17950 / CFBP 7177 / CIP 109463 / NCPPB 4357 / Et1/99)).